Here is a 139-residue protein sequence, read N- to C-terminus: ATP synthase epsilon chain (139 aa).

The protein belongs to the ATPase epsilon chain family. In terms of assembly, F-type ATPases have 2 components, CF(1) - the catalytic core - and CF(0) - the membrane proton channel. CF(1) has five subunits: alpha(3), beta(3), gamma(1), delta(1), epsilon(1). CF(0) has three main subunits: a, b and c.

Its subcellular location is the cell inner membrane. In terms of biological role, produces ATP from ADP in the presence of a proton gradient across the membrane. This chain is ATP synthase epsilon chain, found in Salmonella arizonae (strain ATCC BAA-731 / CDC346-86 / RSK2980).